Reading from the N-terminus, the 510-residue chain is Cytochrome P450 monooxygenase btcC (510 aa).

A helical transmembrane segment spans residues 1 to 21; the sequence is MSFPGVIFVVSFFPLLMGIAV. A heme-binding site is contributed by cysteine 446.

It belongs to the cytochrome P450 family. Requires heme as cofactor.

It localises to the membrane. The protein operates within secondary metabolite biosynthesis; terpenoid biosynthesis. Functionally, cytochrome P450 monooxygenase; part of the gene cluster that mediates the biosynthesis of betaestacins. The bifunctional terpene synthase btcA converts isopentenyl diphosphate (IPP) and dimethylallyl diphosphate (DMAPP) into the sesterterpene betaestacin I. The C-terminal prenyltransferase (PT) domain of btcA catalyzes formation of GFPP, whereas the N-terminal terpene cyclase (TC) domain catalyzes the cyclization of GFPP into betaestacin I. The cytochrome P450 monooxygenase btcB is then responsible for the six-step oxidation of betaestacin I to yield betaestacin II. The roles of the cytochrome P450 monooxygenase btcC and the alpha-ketoglutarate-dependent dioxygenase btcD have not been identified yet. The protein is Cytochrome P450 monooxygenase btcC of Neocamarosporium betae (Beet black rot fungus).